Here is a 132-residue protein sequence, read N- to C-terminus: Large ribosomal subunit protein bL12 (132 aa).

It belongs to the bacterial ribosomal protein bL12 family. In terms of assembly, homodimer. Part of the ribosomal stalk of the 50S ribosomal subunit. Forms a multimeric L10(L12)X complex, where L10 forms an elongated spine to which 2 to 4 L12 dimers bind in a sequential fashion. Binds GTP-bound translation factors.

Functionally, forms part of the ribosomal stalk which helps the ribosome interact with GTP-bound translation factors. Is thus essential for accurate translation. This Prochlorococcus marinus (strain MIT 9211) protein is Large ribosomal subunit protein bL12.